The chain runs to 264 residues: Ribonuclease HII (264 aa).

The RNase H type-2 domain maps to 33-224 (GPVAGVDEVG…VRRVASGSNT (192 aa)). A divalent metal cation contacts are provided by aspartate 39, glutamate 40, and aspartate 133. Residues 222–264 (SNTAEVADGQPDPRDGTAQTGEGRWSKSSHPATMRATGRAQGT) form a disordered region.

The protein belongs to the RNase HII family. It depends on Mn(2+) as a cofactor. Mg(2+) is required as a cofactor.

The protein resides in the cytoplasm. It carries out the reaction Endonucleolytic cleavage to 5'-phosphomonoester.. Its function is as follows. Endonuclease that specifically degrades the RNA of RNA-DNA hybrids. The sequence is that of Ribonuclease HII from Mycobacterium bovis (strain BCG / Pasteur 1173P2).